A 538-amino-acid polypeptide reads, in one-letter code: Phosphoenolpyruvate carboxykinase (ATP) (538 aa).

Arg61, Tyr195, and Lys201 together coordinate substrate. ATP is bound by residues Lys201, His220, and 236–244 (GLSGTGKTT). Residues Lys201 and His220 each contribute to the Mn(2+) site. Residue Asp257 participates in Mn(2+) binding. Positions 285, 323, and 449 each coordinate ATP. Substrate is bound at residue Arg323.

This sequence belongs to the phosphoenolpyruvate carboxykinase (ATP) family. Mn(2+) is required as a cofactor.

It is found in the cytoplasm. It catalyses the reaction oxaloacetate + ATP = phosphoenolpyruvate + ADP + CO2. Its pathway is carbohydrate biosynthesis; gluconeogenesis. Its function is as follows. Involved in the gluconeogenesis. Catalyzes the conversion of oxaloacetate (OAA) to phosphoenolpyruvate (PEP) through direct phosphoryl transfer between the nucleoside triphosphate and OAA. The polypeptide is Phosphoenolpyruvate carboxykinase (ATP) (Nitrobacter hamburgensis (strain DSM 10229 / NCIMB 13809 / X14)).